A 325-amino-acid chain; its full sequence is Tetraacyldisaccharide 4'-kinase (325 aa).

55–62 is a binding site for ATP; sequence TAGGNGKT.

The protein belongs to the LpxK family.

The catalysed reaction is a lipid A disaccharide + ATP = a lipid IVA + ADP + H(+). The protein operates within glycolipid biosynthesis; lipid IV(A) biosynthesis; lipid IV(A) from (3R)-3-hydroxytetradecanoyl-[acyl-carrier-protein] and UDP-N-acetyl-alpha-D-glucosamine: step 6/6. Functionally, transfers the gamma-phosphate of ATP to the 4'-position of a tetraacyldisaccharide 1-phosphate intermediate (termed DS-1-P) to form tetraacyldisaccharide 1,4'-bis-phosphate (lipid IVA). This chain is Tetraacyldisaccharide 4'-kinase, found in Salmonella paratyphi B (strain ATCC BAA-1250 / SPB7).